Reading from the N-terminus, the 239-residue chain is Uridylate kinase (239 aa).

10-13 (KLSG) contacts ATP. Residues 18–23 (GEDGYG) are involved in allosteric activation by GTP. Residue Gly-52 participates in UMP binding. Gly-53 and Arg-57 together coordinate ATP. Residues Asp-72 and 133–140 (TGNPYFTT) contribute to the UMP site. Residues Thr-160, Tyr-166, and Asp-169 each coordinate ATP.

The protein belongs to the UMP kinase family. In terms of assembly, homohexamer.

Its subcellular location is the cytoplasm. The enzyme catalyses UMP + ATP = UDP + ADP. The protein operates within pyrimidine metabolism; CTP biosynthesis via de novo pathway; UDP from UMP (UMPK route): step 1/1. With respect to regulation, allosterically activated by GTP. Inhibited by UTP. Its function is as follows. Catalyzes the reversible phosphorylation of UMP to UDP. This Chlorobium chlorochromatii (strain CaD3) protein is Uridylate kinase.